Consider the following 355-residue polypeptide: Class E basic helix-loop-helix protein 22 (355 aa).

Disordered regions lie at residues 34–90 and 128–215; these read AFRS…GGGG and GRGS…KEQK. 2 stretches are compositionally biased toward gly residues: residues 81–90 and 185–207; these read GGGGASGGGG and GGSG…GGGS. Residues 216–270 enclose the bHLH domain; the sequence is ALRLNINARERRRMHDLNDALDELRAVIPYAHSPSVRKLSKIATLLLAKNYILMQ.

In terms of assembly, interacts with PRDM8. As to expression, brain-specific, with the highest expression in the cerebellum.

The protein resides in the nucleus. In terms of biological role, inhibits DNA binding of TCF3/E47 homodimers and TCF3 (E47)/NEUROD1 heterodimers and acts as a strong repressor of Neurod1 and Myod-responsive genes, probably by heterodimerization with class a basic helix-loop-helix factors. Despite the presence of an intact basic domain, does not bind to DNA. In the brain, may function as an area-specific transcription factor that regulates the postmitotic acquisition of area identities and elucidate the genetic hierarchy between progenitors and postmitotic neurons driving neocortical arealization. May be required for the survival of a specific population of inhibitory neurons in the superficial laminae of the spinal cord dorsal horn that may regulate pruritis. Seems to play a crucial role in the retinogenesis, in the specification of amacrine and bipolar subtypes. Forms with PRDM8 a transcriptional repressor complex controlling genes involved in neural development and neuronal differentiation. This is Class E basic helix-loop-helix protein 22 (Bhlhe22) from Mus musculus (Mouse).